The sequence spans 403 residues: Tryptophan synthase beta chain 1 (403 aa).

At lysine 96 the chain carries N6-(pyridoxal phosphate)lysine.

Belongs to the TrpB family. In terms of assembly, tetramer of two alpha and two beta chains. It depends on pyridoxal 5'-phosphate as a cofactor.

The enzyme catalyses (1S,2R)-1-C-(indol-3-yl)glycerol 3-phosphate + L-serine = D-glyceraldehyde 3-phosphate + L-tryptophan + H2O. Its pathway is amino-acid biosynthesis; L-tryptophan biosynthesis; L-tryptophan from chorismate: step 5/5. Its function is as follows. The beta subunit is responsible for the synthesis of L-tryptophan from indole and L-serine. This is Tryptophan synthase beta chain 1 (trpB1) from Wolinella succinogenes (strain ATCC 29543 / DSM 1740 / CCUG 13145 / JCM 31913 / LMG 7466 / NCTC 11488 / FDC 602W) (Vibrio succinogenes).